Here is a 155-residue protein sequence, read N- to C-terminus: Ribosomal RNA large subunit methyltransferase H (155 aa).

S-adenosyl-L-methionine is bound by residues leucine 72, glycine 103, and 122–127 (LSPLTL).

Belongs to the RNA methyltransferase RlmH family. As to quaternary structure, homodimer.

The protein localises to the cytoplasm. The enzyme catalyses pseudouridine(1915) in 23S rRNA + S-adenosyl-L-methionine = N(3)-methylpseudouridine(1915) in 23S rRNA + S-adenosyl-L-homocysteine + H(+). Its function is as follows. Specifically methylates the pseudouridine at position 1915 (m3Psi1915) in 23S rRNA. The polypeptide is Ribosomal RNA large subunit methyltransferase H (Pasteurella multocida (strain Pm70)).